The following is a 111-amino-acid chain: Large ribosomal subunit protein P1 (111 aa).

Residues 75-111 form a disordered region; that stretch reads AAAPAAEEKAEEEKKEEEEEKKEEEVDLSGLSGMFGF. Residues 88 to 101 are compositionally biased toward acidic residues; that stretch reads KKEEEEEKKEEEVD.

Belongs to the eukaryotic ribosomal protein P1/P2 family. In terms of assembly, part of the 50S ribosomal subunit. Homodimer, it forms part of the ribosomal stalk which helps the ribosome interact with GTP-bound translation factors. Forms a heptameric uL10/P0(P1)2(P1)2(P1)2 complex, where uL10/P0 forms an elongated spine to which the P1 dimers bind in a sequential fashion.

Its function is as follows. Forms part of the ribosomal stalk, playing a central role in the interaction of the ribosome with GTP-bound translation factors. The sequence is that of Large ribosomal subunit protein P1 from Aeropyrum pernix (strain ATCC 700893 / DSM 11879 / JCM 9820 / NBRC 100138 / K1).